The following is a 383-amino-acid chain: Cysteine protease StiP (383 aa).

Belongs to the cysteine protease StiP family. In terms of processing, is probably processed via an autocatalytic removal of a proregion of about 100 amino acids.

Is inhibited by bromopyruvate in vitro. Activity is not affected by the presence of tellurite. Cysteine protease that may play a role in regulating cell morphology in response to stressful conditions which likely cause oxidative damage. Appears to catalyze its own cleavage, which probably leads to its activation. The chain is Cysteine protease StiP (stiP) from Acinetobacter baylyi (strain ATCC 33305 / BD413 / ADP1).